The primary structure comprises 295 residues: MSTPWEKAAVLVEALPYIKKFYGKTIVIKYGGHAMLDDSLKEAVLTDAVLMKYVGMHPVIVHGGGPEITEMLKRVGKDSRFVGGLRVTDGETMEIVEMVLVGKINKGIVSRINRIGGLAVGLSGKDAGLFQAVKKYRKVRTPEGREETADIGFVGEISRVNPQIVSTVIAEGYIPVIAPVAVGPEGESYNINADYAAGRLAAALGADKLIILTDVEGIMADRSDPGSLISVLRASEVPSLIERGVIDGGMIPKVECCLDALAGGVRTTHILDGRVPHSILLEIFTDKGIGTMVEK.

Residues 64–65 (GG), R86, and N190 contribute to the substrate site.

This sequence belongs to the acetylglutamate kinase family. ArgB subfamily.

Its subcellular location is the cytoplasm. It catalyses the reaction N-acetyl-L-glutamate + ATP = N-acetyl-L-glutamyl 5-phosphate + ADP. Its pathway is amino-acid biosynthesis; L-arginine biosynthesis; N(2)-acetyl-L-ornithine from L-glutamate: step 2/4. In terms of biological role, catalyzes the ATP-dependent phosphorylation of N-acetyl-L-glutamate. This is Acetylglutamate kinase from Pelotomaculum thermopropionicum (strain DSM 13744 / JCM 10971 / SI).